The sequence spans 146 residues: Acidic phospholipase A2 S14-72F (146 aa).

The first 19 residues, 1-19 (MYPAHLLVLLAVCVSLLGA), serve as a signal peptide directing secretion. Positions 20–27 (ASIPPQPL) are excised as a propeptide. Disulfide bonds link cysteine 38-cysteine 98, cysteine 54-cysteine 145, cysteine 56-cysteine 72, cysteine 71-cysteine 126, cysteine 78-cysteine 119, cysteine 87-cysteine 112, and cysteine 105-cysteine 117. Residues tyrosine 55, glycine 57, and glycine 59 each coordinate Ca(2+). Residue histidine 75 is part of the active site. Ca(2+) is bound at residue aspartate 76. Residue aspartate 120 is part of the active site.

It belongs to the phospholipase A2 family. Group I subfamily. D49 sub-subfamily. The cofactor is Ca(2+). As to expression, expressed by the venom gland.

Its subcellular location is the secreted. It carries out the reaction a 1,2-diacyl-sn-glycero-3-phosphocholine + H2O = a 1-acyl-sn-glycero-3-phosphocholine + a fatty acid + H(+). In terms of biological role, snake venom phospholipase A2 (PLA2) that inhibits collagen-induced platelet aggregation. PLA2 catalyzes the calcium-dependent hydrolysis of the 2-acyl groups in 3-sn-phosphoglycerides. This chain is Acidic phospholipase A2 S14-72F, found in Austrelaps superbus (Lowland copperhead snake).